Reading from the N-terminus, the 104-residue chain is Toxin-like protein 14 (104 aa).

Residues 1-25 form the signal peptide; that stretch reads MNTYNARLYIFSLALALVILKGTKC.

Contains 4 disulfide bonds. Expressed by the venom gland.

The protein resides in the secreted. The polypeptide is Toxin-like protein 14 (Urodacus yaschenkoi (Inland robust scorpion)).